The primary structure comprises 508 residues: Non-structural protein 1 (508 aa).

The segment covering 424–453 has biased composition (polar residues); that stretch reads NTESTTTNNAQSPVSDPVNASANVKTSPAG. Residues 424 to 464 are disordered; the sequence is NTESTTTNNAQSPVSDPVNASANVKTSPAGTHTDESVMKKE. Over residues 455 to 464 the composition is skewed to basic and acidic residues; the sequence is HTDESVMKKE.

This chain is Non-structural protein 1 (Segment-5), found in Banna virus (BAV).